The following is a 37-amino-acid chain: MKVAASVKKMCRNCKVIRRKGVVRVICTDPRHKQRQG.

The protein belongs to the bacterial ribosomal protein bL36 family.

This chain is Large ribosomal subunit protein bL36, found in Methylibium petroleiphilum (strain ATCC BAA-1232 / LMG 22953 / PM1).